Consider the following 464-residue polypeptide: GTPase Der (464 aa).

2 EngA-type G domains span residues 5 to 169 (PTIA…KQKG) and 190 to 368 (IKVA…RESH). Residues 11–18 (GRPNVGKS), 58–62 (DTGGI), 121–124 (NKAD), 196–203 (GRPNAGKS), 243–247 (DTAGM), and 308–311 (NKFD) each bind GTP. The region spanning 369–461 (NLPTTGQLNR…PVIFSARSRV (93 aa)) is the KH-like domain.

Belongs to the TRAFAC class TrmE-Era-EngA-EngB-Septin-like GTPase superfamily. EngA (Der) GTPase family. Associates with the 50S ribosomal subunit.

GTPase that plays an essential role in the late steps of ribosome biogenesis. The chain is GTPase Der from Akkermansia muciniphila (strain ATCC BAA-835 / DSM 22959 / JCM 33894 / BCRC 81048 / CCUG 64013 / CIP 107961 / Muc).